We begin with the raw amino-acid sequence, 95 residues long: Acylphosphatase (95 aa).

The 88-residue stretch at 8-95 (RAKILVRGKV…GNFRTFEIKK (88 aa)) folds into the Acylphosphatase-like domain. Residues R23 and N41 contribute to the active site.

It belongs to the acylphosphatase family.

The enzyme catalyses an acyl phosphate + H2O = a carboxylate + phosphate + H(+). This chain is Acylphosphatase (acyP), found in Leptospira interrogans serogroup Icterohaemorrhagiae serovar copenhageni (strain Fiocruz L1-130).